The sequence spans 409 residues: Imidazolonepropionase (409 aa).

Fe(3+) contacts are provided by His78 and His80. Zn(2+) is bound by residues His78 and His80. 4-imidazolone-5-propanoate-binding residues include Arg87, Tyr150, and His183. Tyr150 is a binding site for N-formimidoyl-L-glutamate. Residue His248 participates in Fe(3+) binding. Position 248 (His248) interacts with Zn(2+). Gln251 contacts 4-imidazolone-5-propanoate. Asp323 contacts Fe(3+). Asp323 serves as a coordination point for Zn(2+). N-formimidoyl-L-glutamate is bound by residues Asn325 and Gly327. Thr328 lines the 4-imidazolone-5-propanoate pocket.

It belongs to the metallo-dependent hydrolases superfamily. HutI family. Requires Zn(2+) as cofactor. Fe(3+) serves as cofactor.

Its subcellular location is the cytoplasm. It carries out the reaction 4-imidazolone-5-propanoate + H2O = N-formimidoyl-L-glutamate. It functions in the pathway amino-acid degradation; L-histidine degradation into L-glutamate; N-formimidoyl-L-glutamate from L-histidine: step 3/3. Catalyzes the hydrolytic cleavage of the carbon-nitrogen bond in imidazolone-5-propanoate to yield N-formimidoyl-L-glutamate. It is the third step in the universal histidine degradation pathway. The protein is Imidazolonepropionase of Mesorhizobium japonicum (strain LMG 29417 / CECT 9101 / MAFF 303099) (Mesorhizobium loti (strain MAFF 303099)).